Consider the following 863-residue polypeptide: Leucine--tRNA ligase (863 aa).

The short motif at 40–51 (PYPSGAGLHVGH) is the 'HIGH' region element. The 'KMSKS' region motif lies at 635–639 (KMSKS). Lysine 638 contacts ATP.

Belongs to the class-I aminoacyl-tRNA synthetase family.

Its subcellular location is the cytoplasm. The enzyme catalyses tRNA(Leu) + L-leucine + ATP = L-leucyl-tRNA(Leu) + AMP + diphosphate. This chain is Leucine--tRNA ligase, found in Leptospira interrogans serogroup Icterohaemorrhagiae serovar copenhageni (strain Fiocruz L1-130).